The sequence spans 259 residues: Phosphatidylserine decarboxylase proenzyme (259 aa).

Catalysis depends on charge relay system; for autoendoproteolytic cleavage activity residues aspartate 86, histidine 142, and serine 226. Catalysis depends on serine 226, which acts as the Schiff-base intermediate with substrate; via pyruvic acid; for decarboxylase activity. Position 226 is a pyruvic acid (Ser); by autocatalysis (serine 226).

Belongs to the phosphatidylserine decarboxylase family. PSD-B subfamily. Prokaryotic type I sub-subfamily. Heterodimer of a large membrane-associated beta subunit and a small pyruvoyl-containing alpha subunit. The cofactor is pyruvate. Is synthesized initially as an inactive proenzyme. Formation of the active enzyme involves a self-maturation process in which the active site pyruvoyl group is generated from an internal serine residue via an autocatalytic post-translational modification. Two non-identical subunits are generated from the proenzyme in this reaction, and the pyruvate is formed at the N-terminus of the alpha chain, which is derived from the carboxyl end of the proenzyme. The autoendoproteolytic cleavage occurs by a canonical serine protease mechanism, in which the side chain hydroxyl group of the serine supplies its oxygen atom to form the C-terminus of the beta chain, while the remainder of the serine residue undergoes an oxidative deamination to produce ammonia and the pyruvoyl prosthetic group on the alpha chain. During this reaction, the Ser that is part of the protease active site of the proenzyme becomes the pyruvoyl prosthetic group, which constitutes an essential element of the active site of the mature decarboxylase.

It is found in the cell membrane. The catalysed reaction is a 1,2-diacyl-sn-glycero-3-phospho-L-serine + H(+) = a 1,2-diacyl-sn-glycero-3-phosphoethanolamine + CO2. The protein operates within phospholipid metabolism; phosphatidylethanolamine biosynthesis; phosphatidylethanolamine from CDP-diacylglycerol: step 2/2. Its function is as follows. Catalyzes the formation of phosphatidylethanolamine (PtdEtn) from phosphatidylserine (PtdSer). This is Phosphatidylserine decarboxylase proenzyme from Geobacillus sp. (strain WCH70).